The sequence spans 303 residues: N-acetyl-D-glucosamine kinase (303 aa).

ATP contacts are provided by residues 4 to 11 and 133 to 140; these read GFDVGGTK and GFGGGLVF. Zn(2+) is bound by residues histidine 157, cysteine 177, cysteine 179, and cysteine 184.

This sequence belongs to the ROK (NagC/XylR) family. NagK subfamily.

It catalyses the reaction N-acetyl-D-glucosamine + ATP = N-acetyl-D-glucosamine 6-phosphate + ADP + H(+). The protein operates within cell wall biogenesis; peptidoglycan recycling. Functionally, catalyzes the phosphorylation of N-acetyl-D-glucosamine (GlcNAc) derived from cell-wall degradation, yielding GlcNAc-6-P. This chain is N-acetyl-D-glucosamine kinase, found in Photobacterium profundum (strain SS9).